The following is a 506-amino-acid chain: MERTLLQWRLLPLLALIVALFSFFFASPRSLQGNNKCSLLPHDHYWISSKRIVTPNGLISGSVEVKGGIIVSVVKEVDWHKSQRSRVKVIDYGEAVLMPGLIDVHVHLDDPGRSEWEGFPSGTKAAAAGGITTLVDMPLNSFPSTVSPETLKLKIEAAKNRIHVDVGFWGGLVPDNALNSSALESLLDAGVLGLKSFMCPSGINDFPMTNITHIKEGLSVLAKYKRPLLVHAEIERDLEIEDGSENDPRSYLTYLKTRPTSWEEGAIRNLLSVTENTRIGGSAEGAHLHIVHLSDASSSLDLIKEAKGKGDSVTVETCPHYLAFSAEEIPEGDTRFKCSPPIRDAANREKLWEALMEGDIDMLSSDHSPTKPELKLMSDGNFLKAWGGISSLQFVLPITWSYGKKYGVTLEQVTSWWSDRPSKLAGLHSKGAVTVGKHADLVVWEPEAEFDVDEDHPIHFKHPSISAYLGRRLSGKVVSTFVRGNLVFGEGKHASDACGSLQLATT.

Histidine 105, histidine 107, lysine 195, histidine 231, histidine 292, and aspartate 366 together coordinate Zn(2+). Lysine 195 carries the N6-carboxylysine modification.

The protein belongs to the metallo-dependent hydrolases superfamily. Allantoinase family. As to quaternary structure, homotetramer. Zn(2+) is required as a cofactor. In terms of processing, carboxylation allows a single lysine to coordinate two zinc ions.

The catalysed reaction is (S)-allantoin + H2O = allantoate + H(+). It participates in nitrogen metabolism; (S)-allantoin degradation; allantoate from (S)-allantoin: step 1/1. Catalyzes the conversion of allantoin (5-ureidohydantoin) to allantoate by hydrolytic cleavage of the five-member hydantoin ring. Catalyzes the first step of the ureide allantoin degradation followed by the sequential activity of AAH, UGLYAH and UAH which allows a complete purine breakdown without the intermediate generation of urea. This is Allantoinase (ALN) from Arabidopsis thaliana (Mouse-ear cress).